Reading from the N-terminus, the 467-residue chain is Venom prothrombin activator omicarin-C catalytic subunit (467 aa).

The first 20 residues, 1 to 20 (MAPQLLLCLILTFLWSLPEA), serve as a signal peptide directing secretion. Positions 21–40 (ESNVFLKSKVANRFLQRTKR) are excised as a propeptide. In terms of domain architecture, Gla spans 41–86 (ANSLFEEFRSGNIERECIEERCSKEEAREVFEDDEKTETFWNVYVD). 4-carboxyglutamate occurs at positions 46, 47, 54, 56, 59, 60, 65, 66, 69, 72, and 75. Residues Cys57 and Cys62 are joined by a disulfide bond. In terms of domain architecture, EGF-like 1; calcium-binding spans 86–122 (DGDQCSSNPCHYRGTCKDGIGSYTCTCLFGYEGKNCE). 11 cysteine pairs are disulfide-bonded: Cys90–Cys101, Cys95–Cys110, Cys112–Cys121, Cys129–Cys140, Cys136–Cys149, Cys151–Cys164, Cys172–Cys329, Cys216–Cys221, Cys236–Cys252, Cys377–Cys391, and Cys402–Cys430. Residue Ser92 is glycosylated (O-linked (Hex...) serine). In terms of domain architecture, EGF-like 2 spans 129 to 164 (CRVDNGNCWHFCKPVQNDIQCSCAEGYLLGEDGHSC). Residues 182–209 (REASLPDFVQSQNATLLKKSDNPSPDIR) constitute a propeptide, activation peptide. In terms of domain architecture, Peptidase S1 spans 210–454 (IVNGMDCKLG…FILWIKRIMR (245 aa)). His251 acts as the Charge relay system in catalysis. Asn254 carries N-linked (GlcNAc...) asparagine glycosylation. Asp309 (charge relay system) is an active-site residue. The Charge relay system role is filled by Ser406.

The protein belongs to the peptidase S1 family. Snake venom subfamily. As to quaternary structure, heterodimer of a light and a heavy chains; disulfide-linked. Is associated with omicarin-C non-catalytic subunit (AC Q58L90) in a non-covalent manner. Post-translationally, gamma-carboxyglutamate residues are formed by vitamin K dependent carboxylation. These residues are essential for the binding of calcium. In terms of tissue distribution, expressed by the venom gland.

The protein localises to the secreted. It carries out the reaction Selective cleavage of Arg-|-Thr and then Arg-|-Ile bonds in prothrombin to form thrombin.. Its activity is regulated as follows. Activated by calcium and negatively charged phospholipids. Functionally, snake prothrombin activator that attacks the hemostatic system of prey. This catalytic subunit is functionally similar to blood coagulation factor Xa. It requires a non-catalytic subunit present in the venom, which is similar to coagulation factor Va, to be fully active. This Oxyuranus microlepidotus (Inland taipan) protein is Venom prothrombin activator omicarin-C catalytic subunit.